Consider the following 122-residue polypeptide: Small ribosomal subunit protein uS13 (122 aa).

Positions 99 to 122 are disordered; it reads RGQRTHTNARTRKGPAKAIAGKKK.

It belongs to the universal ribosomal protein uS13 family. As to quaternary structure, part of the 30S ribosomal subunit. Forms a loose heterodimer with protein S19. Forms two bridges to the 50S subunit in the 70S ribosome.

Located at the top of the head of the 30S subunit, it contacts several helices of the 16S rRNA. In the 70S ribosome it contacts the 23S rRNA (bridge B1a) and protein L5 of the 50S subunit (bridge B1b), connecting the 2 subunits; these bridges are implicated in subunit movement. Contacts the tRNAs in the A and P-sites. The chain is Small ribosomal subunit protein uS13 from Cereibacter sphaeroides (strain ATCC 17029 / ATH 2.4.9) (Rhodobacter sphaeroides).